Here is a 299-residue protein sequence, read N- to C-terminus: Pyrroline-5-carboxylate reductase 2 (299 aa).

The protein belongs to the pyrroline-5-carboxylate reductase family. Homodecamer; composed of 5 homodimers.

It carries out the reaction L-proline + NADP(+) = (S)-1-pyrroline-5-carboxylate + NADPH + 2 H(+). It catalyses the reaction L-proline + NAD(+) = (S)-1-pyrroline-5-carboxylate + NADH + 2 H(+). The protein operates within amino-acid biosynthesis; L-proline biosynthesis; L-proline from L-glutamate 5-semialdehyde: step 1/1. The polypeptide is Pyrroline-5-carboxylate reductase 2 (pycr2) (Dictyostelium discoideum (Social amoeba)).